A 149-amino-acid polypeptide reads, in one-letter code: Calmodulin (149 aa).

Alanine 2 bears the N-acetylalanine mark. 4 consecutive EF-hand domains span residues 8-43, 44-79, 81-116, and 117-149; these read EQIA…LGQN, PTEA…KMKD, DSEE…LGEK, and LTDE…MTNK. Positions 21, 23, 25, 27, 32, 57, 59, 61, 63, 68, 94, 96, 98, and 105 each coordinate Ca(2+). Lysine 116 carries the post-translational modification N6,N6,N6-trimethyllysine. Ca(2+)-binding residues include aspartate 130, aspartate 132, aspartate 134, glutamine 136, and glutamate 141.

It belongs to the calmodulin family.

Its function is as follows. Calmodulin mediates the control of a large number of enzymes, ion channels and other proteins by Ca(2+). Among the enzymes to be stimulated by the calmodulin-Ca(2+) complex are a number of protein kinases and phosphatases. This Ciona intestinalis (Transparent sea squirt) protein is Calmodulin.